The following is a 590-amino-acid chain: Aspartate--tRNA(Asp/Asn) ligase (590 aa).

Glu176 is a binding site for L-aspartate. Residues 200–203 (QLFK) are aspartate. Arg222 and His451 together coordinate L-aspartate. Residue 222–224 (RDE) participates in ATP binding. Glu485 is a binding site for ATP. L-aspartate is bound at residue Arg492. Position 537–540 (537–540 (GIDR)) interacts with ATP.

It belongs to the class-II aminoacyl-tRNA synthetase family. Type 1 subfamily. In terms of assembly, homodimer.

The protein localises to the cytoplasm. It catalyses the reaction tRNA(Asx) + L-aspartate + ATP = L-aspartyl-tRNA(Asx) + AMP + diphosphate. In terms of biological role, aspartyl-tRNA synthetase with relaxed tRNA specificity since it is able to aspartylate not only its cognate tRNA(Asp) but also tRNA(Asn). Reaction proceeds in two steps: L-aspartate is first activated by ATP to form Asp-AMP and then transferred to the acceptor end of tRNA(Asp/Asn). The chain is Aspartate--tRNA(Asp/Asn) ligase from Ehrlichia canis (strain Jake).